We begin with the raw amino-acid sequence, 113 residues long: Large ribosomal subunit protein bL19 (113 aa).

It belongs to the bacterial ribosomal protein bL19 family.

Its function is as follows. This protein is located at the 30S-50S ribosomal subunit interface and may play a role in the structure and function of the aminoacyl-tRNA binding site. The chain is Large ribosomal subunit protein bL19 from Corynebacterium diphtheriae (strain ATCC 700971 / NCTC 13129 / Biotype gravis).